The chain runs to 238 residues: Pyridoxine 5'-phosphate synthase (238 aa).

3-amino-2-oxopropyl phosphate is bound at residue N9. A 1-deoxy-D-xylulose 5-phosphate-binding site is contributed by 11 to 12; that stretch reads DH. R20 contributes to the 3-amino-2-oxopropyl phosphate binding site. H45 (proton acceptor) is an active-site residue. The 1-deoxy-D-xylulose 5-phosphate site is built by R47 and H52. E72 acts as the Proton acceptor in catalysis. T102 is a binding site for 1-deoxy-D-xylulose 5-phosphate. The Proton donor role is filled by H189. 3-amino-2-oxopropyl phosphate contacts are provided by residues G190 and 211-212; that span reads GH.

This sequence belongs to the PNP synthase family. As to quaternary structure, homooctamer; tetramer of dimers.

It is found in the cytoplasm. The enzyme catalyses 3-amino-2-oxopropyl phosphate + 1-deoxy-D-xylulose 5-phosphate = pyridoxine 5'-phosphate + phosphate + 2 H2O + H(+). Its pathway is cofactor biosynthesis; pyridoxine 5'-phosphate biosynthesis; pyridoxine 5'-phosphate from D-erythrose 4-phosphate: step 5/5. In terms of biological role, catalyzes the complicated ring closure reaction between the two acyclic compounds 1-deoxy-D-xylulose-5-phosphate (DXP) and 3-amino-2-oxopropyl phosphate (1-amino-acetone-3-phosphate or AAP) to form pyridoxine 5'-phosphate (PNP) and inorganic phosphate. This Ehrlichia ruminantium (strain Welgevonden) protein is Pyridoxine 5'-phosphate synthase.